The following is a 102-amino-acid chain: Large ribosomal subunit protein bL21 (102 aa).

It belongs to the bacterial ribosomal protein bL21 family. In terms of assembly, part of the 50S ribosomal subunit. Contacts protein L20.

In terms of biological role, this protein binds to 23S rRNA in the presence of protein L20. The chain is Large ribosomal subunit protein bL21 from Geobacter sp. (strain M21).